The following is an 88-amino-acid chain: Small ribosomal subunit protein bS18A (88 aa).

Belongs to the bacterial ribosomal protein bS18 family. In terms of assembly, part of the 30S ribosomal subunit. Forms a tight heterodimer with protein bS6.

Binds as a heterodimer with protein bS6 to the central domain of the 16S rRNA, where it helps stabilize the platform of the 30S subunit. This Mycolicibacterium gilvum (strain PYR-GCK) (Mycobacterium gilvum (strain PYR-GCK)) protein is Small ribosomal subunit protein bS18A.